Here is a 73-residue protein sequence, read N- to C-terminus: Disintegrin trigramin-gamma (73 aa).

Residues 1-73 (EAGEDCDCGS…AGCPRNPLHA (73 aa)) enclose the Disintegrin domain. 6 disulfide bridges follow: Cys-6–Cys-21, Cys-8–Cys-16, Cys-15–Cys-38, Cys-29–Cys-35, Cys-34–Cys-59, and Cys-47–Cys-66. Positions 51–53 (RGD) match the Cell attachment site motif.

Belongs to the venom metalloproteinase (M12B) family. P-II subfamily. P-IIa sub-subfamily. Monomer (disintegrin). As to expression, expressed by the venom gland.

The protein resides in the secreted. Inhibits fibrinogen interaction with platelets. Acts by binding to alpha-IIb/beta-3 (ITGA2B/ITGB3) on the platelet surface and inhibits aggregation induced by ADP, thrombin, platelet-activating factor and collagen. This is Disintegrin trigramin-gamma from Craspedocephalus gramineus (Bamboo pit viper).